Here is a 194-residue protein sequence, read N- to C-terminus: Recombination protein RecR (194 aa).

The segment at 53–68 (CEICFNLDVTSPCSIC) adopts a C4-type zinc-finger fold. The 96-residue stretch at 76–171 (SLLCIVEELG…KVTRLACGIP (96 aa)) folds into the Toprim domain.

It belongs to the RecR family.

In terms of biological role, may play a role in DNA repair. It seems to be involved in an RecBC-independent recombinational process of DNA repair. It may act with RecF and RecO. This is Recombination protein RecR from Anaplasma phagocytophilum (strain HZ).